The primary structure comprises 270 residues: Endonuclease 4 (270 aa).

Zn(2+) contacts are provided by His69, His108, Glu139, Asp169, His172, His204, Asp217, His219, and Glu248.

The protein belongs to the AP endonuclease 2 family. Zn(2+) is required as a cofactor.

The catalysed reaction is Endonucleolytic cleavage to 5'-phosphooligonucleotide end-products.. In terms of biological role, endonuclease IV plays a role in DNA repair. It cleaves phosphodiester bonds at apurinic or apyrimidinic (AP) sites, generating a 3'-hydroxyl group and a 5'-terminal sugar phosphate. In addition, possesses a 3'-5' exonuclease activity. The protein is Endonuclease 4 of Thermus thermophilus (strain ATCC BAA-163 / DSM 7039 / HB27).